A 395-amino-acid polypeptide reads, in one-letter code: Membrane glycoprotein spo14 (395 aa).

At 1–346 (MAELHLSFPA…KLEDAGVILR (346 aa)) the chain is on the cytoplasmic side. 2 WD repeats span residues 250 to 285 (MIRD…RFMS) and 290 to 326 (KLSQ…CLQF). The helical; Signal-anchor for type II membrane protein transmembrane segment at 347-367 (LSLMFPFVLAILYFYLQLLFP) threads the bilayer. At 368–395 (DEKLDAIHRFFSFILHIFSKYTIRNYDL) the chain is on the lumenal side.

It localises to the endoplasmic reticulum membrane. The protein localises to the golgi apparatus. Its subcellular location is the cis-Golgi network membrane. In terms of biological role, required for the formation of transport vesicles from the ER. This function involves the cytoplasmic domain of the protein, which is thought to interact with the small GTP-binding protein sar1. The sequence is that of Membrane glycoprotein spo14 (spo14) from Schizosaccharomyces pombe (strain 972 / ATCC 24843) (Fission yeast).